We begin with the raw amino-acid sequence, 317 residues long: COP9 signalosome complex subunit 6a (317 aa).

The 135-residue stretch at 30–164 folds into the MPN domain; sequence TQLNPPASIC…VTIYESELHV (135 aa).

This sequence belongs to the peptidase M67A family. CSN6 subfamily. In terms of assembly, component of the CSN complex, probably composed of CSN1, CSN2, CSN3, CSN4, CSN5 (CSN5A or CSN5B), CSN6 (CSN6A or CSN6B), CSN7 and CSN8. Interacts with itself. In the complex, it probably interacts directly with CSN4 and CSN5A or CSN5B. Interacts with CSN7 (via C-terminal tail). Binds to the translation initiation factors TIF3E1.

It localises to the cytoplasm. It is found in the nucleus. Functionally, component of the COP9 signalosome complex (CSN), a complex involved in various cellular and developmental processes such as photomorphogenesis and auxin and jasmonate responses. The CSN complex is an essential regulator of the ubiquitin (Ubl) conjugation pathway by mediating the deneddylation of the cullin subunits of SCF-type E3 ligase complexes, leading to decrease the Ubl ligase activity of SCF. It is involved in repression of photomorphogenesis in darkness by regulating the activity of COP1-containing Ubl ligase complexes. The complex is also required for degradation of PSIAA6 by regulating the activity of the Ubl ligase SCF-TIR complex. Essential for the structural integrity of the CSN holocomplex. The chain is COP9 signalosome complex subunit 6a from Arabidopsis thaliana (Mouse-ear cress).